The primary structure comprises 199 residues: ATP-dependent Clp protease proteolytic subunit (199 aa).

Residue Ser97 is the Nucleophile of the active site. The active site involves His122.

The protein belongs to the peptidase S14 family. In terms of assembly, fourteen ClpP subunits assemble into 2 heptameric rings which stack back to back to give a disk-like structure with a central cavity, resembling the structure of eukaryotic proteasomes.

The protein resides in the cytoplasm. The catalysed reaction is Hydrolysis of proteins to small peptides in the presence of ATP and magnesium. alpha-casein is the usual test substrate. In the absence of ATP, only oligopeptides shorter than five residues are hydrolyzed (such as succinyl-Leu-Tyr-|-NHMec, and Leu-Tyr-Leu-|-Tyr-Trp, in which cleavage of the -Tyr-|-Leu- and -Tyr-|-Trp bonds also occurs).. In terms of biological role, cleaves peptides in various proteins in a process that requires ATP hydrolysis. Has a chymotrypsin-like activity. Plays a major role in the degradation of misfolded proteins. This is ATP-dependent Clp protease proteolytic subunit from Pelobacter propionicus (strain DSM 2379 / NBRC 103807 / OttBd1).